Reading from the N-terminus, the 435-residue chain is Probable aminotransferase gliI (435 aa).

Lysine 266 bears the N6-(pyridoxal phosphate)lysine mark.

The protein belongs to the class-I pyridoxal-phosphate-dependent aminotransferase family. It depends on pyridoxal 5'-phosphate as a cofactor.

Its pathway is mycotoxin biosynthesis. In terms of biological role, probable aminotransferase; part of the gene cluster that mediates the biosynthesis of gliotoxin, a member of the epipolythiodioxopiperazine (ETP) class of toxins characterized by a disulfide bridged cyclic dipeptide. The first step in gliotoxin biosynthesis is the condensation of serine and phenylalanine to form the cyclo-L-phenylalanyl-L-serine diketopiperazine (DKP) by the NRPS gliP. GliP is also able to produce the DKP cyclo-L-tryptophanyl-L-serine, suggesting that the substrate specificity of the first adenylation (A) domain in gliP is sufficiently relaxed to accommodate both L-Phe and L-Trp. The cytochrome P450 monooxygenase gliC has been shown to catalyze the subsequent hydroxylation of the alpha-carbon of L-Phe in cyclo-L-phenylalanyl-L-serine whereas the second cytochrome P450 enzyme, gliF, is presumably involved in the modification of the DKP side chain. The glutathione S-transferase (GST) gliG then forms a bis-glutathionylated biosynthetic intermediate which is responsible for the sulfurization of gliotoxin. This bis-glutathionylated intermediate is subsequently processed by the gamma-glutamyl cyclotransferase gliK to remove both gamma-glutamyl moieties. Subsequent processing via gliI yields a biosynthetic intermediate, which is N-methylated via the N-methyltransferase gliN, before the gliotoxin oxidoreductase gliT-mediated disulfide bridge closure. GliN-mediated amide methylation confers stability to ETP, damping the spontaneous formation of tri- and tetrasulfides. Intracellular dithiol gliotoxin oxidized by gliT is subsequently effluxed by gliA. Gliotoxin contributes to pathogenesis during invasive aspergillosis. In macrophages and neutrophils, gliotoxin showed inhibition of various different cell functions including cytokine production, antigen presentation, phagocytosis, and production of reactive oxygen species. The polypeptide is Probable aminotransferase gliI (Aspergillus fumigatus (strain ATCC MYA-4609 / CBS 101355 / FGSC A1100 / Af293) (Neosartorya fumigata)).